A 312-amino-acid polypeptide reads, in one-letter code: tRNA dimethylallyltransferase (312 aa).

15-22 (GPTAAGKS) contacts ATP. 17-22 (TAAGKS) provides a ligand contact to substrate. The interaction with substrate tRNA stretch occupies residues 40–43 (DSMQ).

The protein belongs to the IPP transferase family. As to quaternary structure, monomer. Mg(2+) is required as a cofactor.

It carries out the reaction adenosine(37) in tRNA + dimethylallyl diphosphate = N(6)-dimethylallyladenosine(37) in tRNA + diphosphate. In terms of biological role, catalyzes the transfer of a dimethylallyl group onto the adenine at position 37 in tRNAs that read codons beginning with uridine, leading to the formation of N6-(dimethylallyl)adenosine (i(6)A). This is tRNA dimethylallyltransferase from Streptomyces avermitilis (strain ATCC 31267 / DSM 46492 / JCM 5070 / NBRC 14893 / NCIMB 12804 / NRRL 8165 / MA-4680).